We begin with the raw amino-acid sequence, 156 residues long: Small ribosomal subunit protein uS7 (156 aa).

This sequence belongs to the universal ribosomal protein uS7 family. Part of the 30S ribosomal subunit. Contacts proteins S9 and S11.

One of the primary rRNA binding proteins, it binds directly to 16S rRNA where it nucleates assembly of the head domain of the 30S subunit. Is located at the subunit interface close to the decoding center, probably blocks exit of the E-site tRNA. This chain is Small ribosomal subunit protein uS7, found in Mycobacterium leprae (strain Br4923).